Reading from the N-terminus, the 139-residue chain is ATP synthase epsilon chain (139 aa).

Belongs to the ATPase epsilon chain family. In terms of assembly, F-type ATPases have 2 components, CF(1) - the catalytic core - and CF(0) - the membrane proton channel. CF(1) has five subunits: alpha(3), beta(3), gamma(1), delta(1), epsilon(1). CF(0) has three main subunits: a, b and c.

Its subcellular location is the cell inner membrane. In terms of biological role, produces ATP from ADP in the presence of a proton gradient across the membrane. This Haemophilus ducreyi (strain 35000HP / ATCC 700724) protein is ATP synthase epsilon chain.